The chain runs to 859 residues: Bifunctional levopimaradiene synthase, chloroplastic (859 aa).

A chloroplast-targeting transit peptide spans 1–70; the sequence is MALLSSSLSS…IACVGEDSLS (70 aa). Lys-259 is a binding site for substrate. Mg(2+)-binding residues include Asp-392 and Asp-394. The DXDD motif motif lies at 392-395; that stretch reads DIDD. Lys-479 serves as a coordination point for substrate. Mg(2+) is bound by residues Asp-611, Asp-615, Asn-755, Thr-759, and Glu-763. The DDXXD motif signature appears at 611-615; that stretch reads DDLYD.

Belongs to the terpene synthase family. Tpsd subfamily. Requires Mg(2+) as cofactor.

The protein resides in the plastid. It is found in the chloroplast. It catalyses the reaction (2E,6E,10E)-geranylgeranyl diphosphate = (+)-copalyl diphosphate. The catalysed reaction is (+)-copalyl diphosphate = abieta-8(14),12-diene + diphosphate. The protein operates within terpene metabolism; oleoresin biosynthesis. Its function is as follows. Involved in defensive oleoresin formation in conifers in response to insect attack or other injury. Involved in diterpene (C20) olefins biosynthesis. Bifunctional enzyme that catalyzes two sequential cyclizations of geranylgeranyl diphosphate (GGPP) to levopimaradiene. Levopimaradiene is the major products of the enzyme followed by abietadiene, neoabietadiene and palustradiene. This chain is Bifunctional levopimaradiene synthase, chloroplastic (TPS-LAS), found in Picea abies (Norway spruce).